A 444-amino-acid polypeptide reads, in one-letter code: RING finger and transmembrane domain-containing protein 2 (444 aa).

At 1–181 (MWLFTVNQVL…ILLAKLCFQH (181 aa)) the chain is on the extracellular side. Disordered regions lie at residues 13-41 (MQRR…ASVD) and 92-149 (PASR…PGTP). Basic residues predominate over residues 107–121 (YHHRQPHHHFHHGGH). Over residues 131–140 (GGDHRGHSEE) the composition is skewed to basic and acidic residues. Residues 182-202 (KLGIAVCIGMASTFAYANSTL) traverse the membrane as a helical segment. Residues 203–214 (REQVSLKEKRSV) lie on the Cytoplasmic side of the membrane. Residues 215–235 (LVILWILAFLAGNTLYVLYTF) traverse the membrane as a helical segment. The Extracellular portion of the chain corresponds to 236 to 255 (SSQQLYNSLIFLKPNLETLD). Residues 256 to 276 (FFDLLWIVGIADFVLKYITIA) form a helical membrane-spanning segment. The Cytoplasmic portion of the chain corresponds to 277 to 329 (LKCLIVALPKIILAVKSKGKFYLVIEELSQLFRSLVPIQLWYKYIMGDDSSNS). The chain crosses the membrane as a helical span at residues 330–350 (YFLGGVLIVLYSLCKSFDICG). Residues 351–444 (RVGGVRKALK…GATSAHFQVY (94 aa)) lie on the Extracellular side of the membrane. Residues 384-422 (CAICQAEFREPLILLCQHVFCEECLCLWLDRERTCPLSR) form an RING-type; degenerate zinc finger.

Its subcellular location is the membrane. Its function is as follows. E3 ubiquitin-protein ligase that negatively regulates IL3-dependent cellular responses through IL3RA ubiquitination and degradation by the proteasome, having an anti-inflammatory effect. The sequence is that of RING finger and transmembrane domain-containing protein 2 (RNFT2) from Pongo abelii (Sumatran orangutan).